The chain runs to 219 residues: Proteasome subunit beta type-9 (219 aa).

A propeptide spans 1-20 (removed in mature form); the sequence is MLRAGAPTAGSFRTKEVHTG. The active-site Nucleophile is threonine 21. An N6-acetyllysine mark is found at lysine 53 and lysine 109.

This sequence belongs to the peptidase T1B family. The 26S proteasome consists of a 20S proteasome core and two 19S regulatory subunits. The 20S proteasome core is composed of 28 subunits that are arranged in four stacked rings, resulting in a barrel-shaped structure. The two end rings are each formed by seven alpha subunits, and the two central rings are each formed by seven beta subunits. The catalytic chamber with the active sites is on the inside of the barrel. Component of the immunoproteasome, where it displaces the equivalent housekeeping subunit PSMB6. Component of the spermatoproteasome, a form of the proteasome specifically found in testis. In terms of processing, autocleaved. The resulting N-terminal Thr residue of the mature subunit is responsible for the nucleophile proteolytic activity.

The protein localises to the cytoplasm. It is found in the nucleus. It catalyses the reaction Cleavage of peptide bonds with very broad specificity.. Functionally, the proteasome is a multicatalytic proteinase complex which is characterized by its ability to cleave peptides with Arg, Phe, Tyr, Leu, and Glu adjacent to the leaving group at neutral or slightly basic pH. The proteasome has an ATP-dependent proteolytic activity. This subunit is involved in antigen processing to generate class I binding peptides. In Mus platythrix (Flat-haired mouse), this protein is Proteasome subunit beta type-9 (Psmb9).